Here is a 114-residue protein sequence, read N- to C-terminus: Ribosome-binding factor A (114 aa).

The protein belongs to the RbfA family. Monomer. Binds 30S ribosomal subunits, but not 50S ribosomal subunits or 70S ribosomes.

The protein localises to the cytoplasm. Functionally, one of several proteins that assist in the late maturation steps of the functional core of the 30S ribosomal subunit. Associates with free 30S ribosomal subunits (but not with 30S subunits that are part of 70S ribosomes or polysomes). Required for efficient processing of 16S rRNA. May interact with the 5'-terminal helix region of 16S rRNA. The protein is Ribosome-binding factor A of Staphylococcus saprophyticus subsp. saprophyticus (strain ATCC 15305 / DSM 20229 / NCIMB 8711 / NCTC 7292 / S-41).